Consider the following 397-residue polypeptide: Flavohemoprotein (397 aa).

The Globin domain maps to 4 to 140 (SFSPHTITLI…IANLLKDREA (137 aa)). Residue His87 coordinates heme b. Catalysis depends on charge relay system residues Tyr97 and Glu139. The reductase stretch occupies residues 151–397 (GGWIHWRRFV…FGPMDEEMAA (247 aa)). The FAD-binding FR-type domain maps to 154-258 (IHWRRFVISK…TPPVGDFFLP (105 aa)). FAD-binding positions include Tyr192 and 207–210 (RNYS). An NADP(+)-binding site is contributed by 271 to 276 (GVGLTP). FAD is bound at residue 387–390 (FFGP).

It belongs to the globin family. Two-domain flavohemoproteins subfamily. This sequence in the C-terminal section; belongs to the flavoprotein pyridine nucleotide cytochrome reductase family. Requires heme b as cofactor. FAD is required as a cofactor.

The enzyme catalyses 2 nitric oxide + NADPH + 2 O2 = 2 nitrate + NADP(+) + H(+). The catalysed reaction is 2 nitric oxide + NADH + 2 O2 = 2 nitrate + NAD(+) + H(+). Its function is as follows. Is involved in NO detoxification in an aerobic process, termed nitric oxide dioxygenase (NOD) reaction that utilizes O(2) and NAD(P)H to convert NO to nitrate, which protects the bacterium from various noxious nitrogen compounds. Therefore, plays a central role in the inducible response to nitrosative stress. The sequence is that of Flavohemoprotein from Xylella fastidiosa (strain Temecula1 / ATCC 700964).